Here is a 94-residue protein sequence, read N- to C-terminus: Putative pterin-4-alpha-carbinolamine dehydratase (94 aa).

It belongs to the pterin-4-alpha-carbinolamine dehydratase family.

It carries out the reaction (4aS,6R)-4a-hydroxy-L-erythro-5,6,7,8-tetrahydrobiopterin = (6R)-L-erythro-6,7-dihydrobiopterin + H2O. This Chloroflexus aggregans (strain MD-66 / DSM 9485) protein is Putative pterin-4-alpha-carbinolamine dehydratase.